Reading from the N-terminus, the 290-residue chain is MSVYHLPTLLNPLVNAIFNCPEPERSPLKKLFANLKTRRFILLAPPSEYLLNYHDVKSKLPLHDLCYNAEFINSYILLMTENSYINTNSRDSHYETLDGKTVVIQWKNNVIHALNGFHIRRRLKILETKILPNFNDYFEGAADFIILFIDQPLNCEFVPNDYLQCFHNYEKIPKNAHAMPNLSIDSFQQERSSFENILHIHPARLTQLGQLFSSYRTLAPGDDPSRSIFESIVQQAFDGMKSDSLFKNFSNLYDLIHDYFELNLYDDIWSRLTTHFKGHEVDTEKINIFQ.

It belongs to the UPF0507 family.

In Saccharomyces cerevisiae (strain ATCC 204508 / S288c) (Baker's yeast), this protein is UPF0507 protein YML003W.